We begin with the raw amino-acid sequence, 193 residues long: Molybdopterin synthase catalytic subunit (193 aa).

Residues 118-119 (HR), K134, and 141-143 (KKE) contribute to the substrate site. The interval 159 to 193 (DRTTTDGTTASSPAPATRPAKGGGCCGRKVRVNES) is disordered. The span at 163–178 (TDGTTASSPAPATRPA) shows a compositional bias: low complexity.

This sequence belongs to the MoaE family. MOCS2B subfamily. Heterotetramer; composed of 2 small (MOCS2A) and 2 large (MOCS2B) subunits.

The protein resides in the cytoplasm. The enzyme catalyses 2 [molybdopterin-synthase sulfur-carrier protein]-C-terminal-Gly-aminoethanethioate + cyclic pyranopterin phosphate + H2O = molybdopterin + 2 [molybdopterin-synthase sulfur-carrier protein]-C-terminal Gly-Gly + 2 H(+). Its pathway is cofactor biosynthesis; molybdopterin biosynthesis. Its function is as follows. Catalytic subunit of the molybdopterin synthase complex, a complex that catalyzes the conversion of precursor Z into molybdopterin. Acts by mediating the incorporation of 2 sulfur atoms from thiocarboxylated MOCS2A into precursor Z to generate a dithiolene group. The polypeptide is Molybdopterin synthase catalytic subunit (Oryza sativa subsp. japonica (Rice)).